A 1009-amino-acid polypeptide reads, in one-letter code: Ulvan lyase, long isoform (1009 aa).

Residues 1–32 form the signal peptide; that stretch reads MTAQKSKYFNRIMTMNTLLFSLLTVGFSQAYA. 137–138 contacts substrate; that stretch reads SH. Catalysis depends on His-138, which acts as the Proton donor/acceptor. Ca(2+) is bound by residues Asp-200, Asp-210, and Lys-212. The substrate site is built by Tyr-291 and Arg-308. Ca(2+) is bound by residues Asp-311, Asp-314, and Tyr-316. Tyr-372 serves as a coordination point for substrate.

Belongs to the polysaccharide lyase 24 family.

Its function is as follows. Ulvan lyase involved in ulvan degradation. Ulvan is the main polysaccharide component of the Ulvales (green seaweed) cell wall. It is composed of disaccharide building blocks comprising 3-sulfated rhamnose (Rha3S) linked to D-glucuronic acid (GlcA), L-iduronic acid (IduA), or D-xylose (Xyl). Ulvan lyase catalyzes preferentially the endolytic cleavage of the glycosidic bond between Rha3S and the uronic acid GlcA, but not IduA, producing oligosaccharides that have unsaturated 4-deoxy-L-threo-hex-4-enopyranosiduronic acid (deltaUA) at the non-reducing end. The most abundant end products in the degradation of the ulvan polysaccharide were deltaUA-Rha3S disaccharides and deltaUA-Rha3S-IduA-Rha3S and deltaUA-Rha3S-Xyl-Rha3S tetrasaccharides. The sequence is that of Ulvan lyase, long isoform (ullA) from Glaciecola sp. (strain KUL10).